The following is a 362-amino-acid chain: Bifunctional chorismate mutase/prephenate dehydratase (362 aa).

Positions 1 to 92 (MEELKELRKE…ACLSLEKKIK (92 aa)) constitute a Chorismate mutase domain. Residues Arg8, Arg25, Lys36, and Glu49 each contribute to the substrate site. Residues 93 to 267 (VAYLGPKATF…NFTRFLVIAK (175 aa)) form the Prephenate dehydratase domain. The 78-residue stretch at 279 to 356 (SILFGVKDEP…QFLKVLGSYP (78 aa)) folds into the ACT domain.

It localises to the cytoplasm. The catalysed reaction is chorismate = prephenate. It catalyses the reaction prephenate + H(+) = 3-phenylpyruvate + CO2 + H2O. It functions in the pathway amino-acid biosynthesis; L-phenylalanine biosynthesis; phenylpyruvate from prephenate: step 1/1. Its pathway is metabolic intermediate biosynthesis; prephenate biosynthesis; prephenate from chorismate: step 1/1. Functionally, catalyzes the Claisen rearrangement of chorismate to prephenate and the decarboxylation/dehydration of prephenate to phenylpyruvate. In Aquifex aeolicus (strain VF5), this protein is Bifunctional chorismate mutase/prephenate dehydratase (pheA).